Here is a 286-residue protein sequence, read N- to C-terminus: Putative 2-aminoethylphosphonate transport system permease protein PhnU (286 aa).

6 consecutive transmembrane segments (helical) span residues 19 to 39, 76 to 96, 111 to 131, 150 to 170, 202 to 222, and 254 to 274; these read WLLL…SLIV, FFAT…LVFI, FIAL…GSAG, FLYS…PLVM, VIFP…LLLT, and YTVA…LFSL. Residues 68 to 275 enclose the ABC transmembrane type-1 domain; sequence LLNTLQIAFF…VLSLGLFSLY (208 aa).

Belongs to the binding-protein-dependent transport system permease family.

The protein localises to the cell inner membrane. Its function is as follows. Probably part of the PhnSTUV complex (TC 3.A.1.11.5) involved in 2-aminoethylphosphonate import. Probably responsible for the translocation of the substrate across the membrane. The protein is Putative 2-aminoethylphosphonate transport system permease protein PhnU (phnU) of Salmonella choleraesuis (strain SC-B67).